A 249-amino-acid chain; its full sequence is DNA repair protein RecO (249 aa).

This sequence belongs to the RecO family.

Its function is as follows. Involved in DNA repair and RecF pathway recombination. This Mycoplasma mycoides subsp. mycoides SC (strain CCUG 32753 / NCTC 10114 / PG1) protein is DNA repair protein RecO.